The sequence spans 321 residues: Annexin A5 (321 aa).

Annexin repeat units lie at residues 15–86, 87–158, 170–242, and 246–317; these read FDAR…SLMR, PARI…VLLQ, ALVE…AVVK, and SVPA…LLCG.

It belongs to the annexin family.

Collagen-binding protein. The protein is Annexin A5 (ANXA5) of Gallus gallus (Chicken).